A 435-amino-acid chain; its full sequence is Adenylosuccinate synthetase (435 aa).

GTP-binding positions include G11–K17 and G39–T41. D12 functions as the Proton acceptor in the catalytic mechanism. Residues D12 and G39 each contribute to the Mg(2+) site. IMP is bound by residues D12 to K15, N37 to H40, T134, R148, N230, T245, and R309. H40 acts as the Proton donor in catalysis. Residue V305–R311 coordinates substrate. Residues R311, K337 to D339, and G419 to G421 contribute to the GTP site.

Belongs to the adenylosuccinate synthetase family. Homodimer. Mg(2+) serves as cofactor.

Its subcellular location is the cytoplasm. It carries out the reaction IMP + L-aspartate + GTP = N(6)-(1,2-dicarboxyethyl)-AMP + GDP + phosphate + 2 H(+). The protein operates within purine metabolism; AMP biosynthesis via de novo pathway; AMP from IMP: step 1/2. Plays an important role in the de novo pathway and in the salvage pathway of purine nucleotide biosynthesis. Catalyzes the first committed step in the biosynthesis of AMP from IMP. The polypeptide is Adenylosuccinate synthetase (Zygosaccharomyces rouxii (strain ATCC 2623 / CBS 732 / NBRC 1130 / NCYC 568 / NRRL Y-229)).